A 136-amino-acid polypeptide reads, in one-letter code: Protein NrdI (136 aa).

The protein belongs to the NrdI family.

Its function is as follows. Probably involved in ribonucleotide reductase function. The chain is Protein NrdI from Salmonella paratyphi A (strain ATCC 9150 / SARB42).